Consider the following 533-residue polypeptide: RNA end formation protein 2 (533 aa).

3 disordered regions span residues 187–254, 260–279, and 321–344; these read SNST…SSMK, LFNK…SKKK, and SSST…PLKK. A compositionally biased stretch (basic and acidic residues) spans 206 to 222; sequence KIKDSEKEKEKEKDKSK. Low complexity predominate over residues 242–252; sequence SSPSPTASTSS. The span at 321-338 shows a compositional bias: low complexity; that stretch reads SSSTSGSSTTTVATPASS.

Interacts with FIR1. Component of the cleavage and polyadenylation factor (CPF) complex, which is composed of PTI1, SYC1, SSU72, GLC7, MPE1, REF2, PFS2, PTA1, YSH1/BRR5, SWD2, CFT2/YDH1, YTH1, CFT1/YHH1, FIP1 and PAP1. Component of the APT complex, which is a subcomplex of CPF, and is composed of PTI1, SYC1, SSU72, GLC7, REF2, PTA1 and SWD2.

The protein resides in the nucleus. In terms of biological role, RNA-binding component of the cleavage and polyadenylation factor (CPF) complex, which plays a key role in polyadenylation-dependent pre-mRNA 3'-end formation and cooperates with cleavage factors including the CFIA complex and NAB4/CFIB. Negative regulator of poly(A) synthesis. Component of the APT complex, which may be involved in polyadenylation-independent transcript 3'-end formation. REF2 is required for 3'-end formation of snoRNAs. The sequence is that of RNA end formation protein 2 (REF2) from Saccharomyces cerevisiae (strain ATCC 204508 / S288c) (Baker's yeast).